The following is a 126-amino-acid chain: Glycine cleavage system H protein (126 aa).

In terms of domain architecture, Lipoyl-binding spans 24 to 105; it reads TLTVGITDHA…AYGVWLFKIK (82 aa). At Lys65 the chain carries N6-lipoyllysine.

This sequence belongs to the GcvH family. In terms of assembly, the glycine cleavage system is composed of four proteins: P, T, L and H. (R)-lipoate is required as a cofactor.

Functionally, the glycine cleavage system catalyzes the degradation of glycine. The H protein shuttles the methylamine group of glycine from the P protein to the T protein. The sequence is that of Glycine cleavage system H protein from Burkholderia cenocepacia (strain ATCC BAA-245 / DSM 16553 / LMG 16656 / NCTC 13227 / J2315 / CF5610) (Burkholderia cepacia (strain J2315)).